A 232-amino-acid polypeptide reads, in one-letter code: Large ribosomal subunit protein uL1 (232 aa).

This sequence belongs to the universal ribosomal protein uL1 family. As to quaternary structure, part of the 50S ribosomal subunit.

In terms of biological role, binds directly to 23S rRNA. The L1 stalk is quite mobile in the ribosome, and is involved in E site tRNA release. Its function is as follows. Protein L1 is also a translational repressor protein, it controls the translation of the L11 operon by binding to its mRNA. This Stenotrophomonas maltophilia (strain R551-3) protein is Large ribosomal subunit protein uL1.